A 278-amino-acid chain; its full sequence is Protoheme IX farnesyltransferase (278 aa).

9 helical membrane-spanning segments follow: residues 12–32 (VIWL…QTVD), 33–53 (WSKL…SAAF), 83–103 (ALVY…YLLG), 105–125 (LPGL…TIWL), 130–150 (WLNI…GYAL), 157–177 (LPAV…IWAL), 204–224 (VIIS…YLAF), 228–248 (LLGL…SILA), and 257–277 (MWKM…ALVF).

This sequence belongs to the UbiA prenyltransferase family. Protoheme IX farnesyltransferase subfamily.

The protein localises to the cell membrane. The enzyme catalyses heme b + (2E,6E)-farnesyl diphosphate + H2O = Fe(II)-heme o + diphosphate. It participates in porphyrin-containing compound metabolism; heme O biosynthesis; heme O from protoheme: step 1/1. In terms of biological role, converts heme B (protoheme IX) to heme O by substitution of the vinyl group on carbon 2 of heme B porphyrin ring with a hydroxyethyl farnesyl side group. The sequence is that of Protoheme IX farnesyltransferase from Pyrobaculum islandicum (strain DSM 4184 / JCM 9189 / GEO3).